Here is a 492-residue protein sequence, read N- to C-terminus: Replication factor C large subunit (492 aa).

46–53 contributes to the ATP binding site; the sequence is GPPGSGKT. The segment at 445 to 492 is disordered; sequence VIPKRPKISDNQISEILTKDNNPKDDVKKASKKPESTSKKQATLDKFF. Residues 461 to 482 show a composition bias toward basic and acidic residues; the sequence is LTKDNNPKDDVKKASKKPESTS.

Belongs to the activator 1 small subunits family. RfcL subfamily. Heteromultimer composed of small subunits (RfcS) and large subunits (RfcL).

Functionally, part of the RFC clamp loader complex which loads the PCNA sliding clamp onto DNA. The chain is Replication factor C large subunit from Methanococcus vannielii (strain ATCC 35089 / DSM 1224 / JCM 13029 / OCM 148 / SB).